Here is a 342-residue protein sequence, read N- to C-terminus: tRNA-specific 2-thiouridylase MnmA (342 aa).

ATP is bound by residues 6-13 (LLSGGVDS) and leucine 32. Cysteine 92 functions as the Nucleophile in the catalytic mechanism. Cysteine 92 and cysteine 191 are disulfide-bonded. Residue glycine 116 coordinates ATP. Residues 138 to 140 (KDQ) are interaction with tRNA. Cysteine 191 functions as the Cysteine persulfide intermediate in the catalytic mechanism. Residues 293-294 (RY) form an interaction with tRNA region.

Belongs to the MnmA/TRMU family.

The protein localises to the cytoplasm. The enzyme catalyses S-sulfanyl-L-cysteinyl-[protein] + uridine(34) in tRNA + AH2 + ATP = 2-thiouridine(34) in tRNA + L-cysteinyl-[protein] + A + AMP + diphosphate + H(+). Functionally, catalyzes the 2-thiolation of uridine at the wobble position (U34) of tRNA, leading to the formation of s(2)U34. The sequence is that of tRNA-specific 2-thiouridylase MnmA from Helicobacter pylori (strain ATCC 700392 / 26695) (Campylobacter pylori).